Reading from the N-terminus, the 423-residue chain is Glutamyl-tRNA reductase (423 aa).

Substrate-binding positions include 49–52 (TCNR), Ser109, 114–116 (EGQ), and Gln120. Cys50 acts as the Nucleophile in catalysis. 189 to 194 (GAGETG) lines the NADP(+) pocket.

The protein belongs to the glutamyl-tRNA reductase family. As to quaternary structure, homodimer.

The enzyme catalyses (S)-4-amino-5-oxopentanoate + tRNA(Glu) + NADP(+) = L-glutamyl-tRNA(Glu) + NADPH + H(+). Its pathway is porphyrin-containing compound metabolism; protoporphyrin-IX biosynthesis; 5-aminolevulinate from L-glutamyl-tRNA(Glu): step 1/2. It participates in porphyrin-containing compound metabolism; chlorophyll biosynthesis. Functionally, catalyzes the NADPH-dependent reduction of glutamyl-tRNA(Glu) to glutamate 1-semialdehyde (GSA). The protein is Glutamyl-tRNA reductase of Chlorobium limicola (strain DSM 245 / NBRC 103803 / 6330).